A 522-amino-acid polypeptide reads, in one-letter code: Echinocystic acid 23-monooxygenase (522 aa).

The helical; Signal-anchor for type II membrane protein transmembrane segment at 4–24 threads the bilayer; that stretch reads LPYIATSIACIVILRWALNMM. A glycan (N-linked (GlcNAc...) asparagine) is linked at Asn190. Cys470 is a heme binding site.

It belongs to the cytochrome P450 family. It depends on heme as a cofactor. In terms of tissue distribution, mainly expressed in flowers and flower buds, to a lesser extent in young leaves and, at low levels, in old leaves, stems and roots.

It localises to the membrane. Its pathway is secondary metabolite biosynthesis; terpenoid biosynthesis. In terms of biological role, component of the oleanane-type triterpene saponins (e.g. saponarioside A and saponarioside B) biosynthetic pathway, leading to the production of natural products with detergent properties used as traditional sources of soap. An oxidoreductase that facilitates the oxidation of the methyl group to a carboxyl group at the C-23 position of echinocystic acid, resulting in the formation of quillaic acid (QA). In Saponaria officinalis (Common soapwort), this protein is Echinocystic acid 23-monooxygenase.